A 249-amino-acid chain; its full sequence is Basigin (249 aa).

The region spanning 1–82 (AAGTIQTSVN…VGRSNIVVEG (82 aa)) is the Ig-like C2-type domain. Over 1 to 187 (AAGTIQTSVN…MTLRVRSRLA (187 aa)) the chain is Extracellular. 2 disulfides stabilise this stretch: C20–C66 and C105–C165. N23, N132, and N166 each carry an N-linked (GlcNAc...) asparagine glycan. The 96-residue stretch at 84–179 (PRIKVGKKSE…TQGSVQEIMT (96 aa)) folds into the Ig-like V-type domain. The helical transmembrane segment at 188–208 (ALWPFLGIVAEVLVLVTIIFI) threads the bilayer. The Cytoplasmic segment spans residues 209–249 (YEKRRKPDQTLDEDDPGAAPLKGSGHHMNDKDKNVRQRNAT). The interval 216–249 (DQTLDEDDPGAAPLKGSGHHMNDKDKNVRQRNAT) is disordered. T218 bears the Phosphothreonine mark. The residue at position 232 (S232) is a Phosphoserine.

As to quaternary structure, homooligomer. Interacts with VEGFA, KDR/VEGFR2, PPIA/CYPA, SLC16A12, SLC16A11, ATP1B2, MAG, L1CAM and AJAP1. Interacts with SLC16A3; interaction mediates SLC16A3 targeting to the plasma membrane. Interacts with SLC16A1; interaction mediates SLC16A1 targeting to the plasma membrane. Interacts with PPIL2; regulates BSG transport to the cell membrane. Interacts with XKR8; promoting its localization at the cell membrane. Interacts with SLC16A6; this interaction mediates targeting to the plasma membrane.

The protein resides in the cell membrane. It is found in the endoplasmic reticulum membrane. Its subcellular location is the basolateral cell membrane. Functionally, signaling receptor for cyclophilins, essential for PPIA/CYPA and PPIB/CYPB-dependent signaling related to chemotaxis and adhesion of immune cells. Plays an important role in targeting the monocarboxylate transporters SLC16A1/GLUT1, SLC16A3, SLC16A8, SLC16A11 and SLC16A12 to the plasma membrane. Acts as a coreceptor for vascular endothelial growth factor receptor 2 (KDR/VEGFR2) in endothelial cells enhancing its VEGFA-mediated activation and downstream signaling. Promotes angiogenesis through EPAS1/HIF2A-mediated up-regulation of VEGFA and KDR/VEGFR2 in endothelial cells. This Cricetulus griseus (Chinese hamster) protein is Basigin (BSG).